Reading from the N-terminus, the 320-residue chain is ATP-dependent 6-phosphofructokinase (320 aa).

Glycine 12 provides a ligand contact to ATP. Residues 22-26 and 55-60 contribute to the ADP site; these read RGVVR and RYSVSD. Residues 73–74 and 103–106 each bind ATP; these read RF and GDGS. Aspartate 104 is a Mg(2+) binding site. 126-128 is a substrate binding site; that stretch reads TID. Aspartate 128 serves as the catalytic Proton acceptor. Arginine 155 contacts ADP. Substrate-binding positions include arginine 163 and 170–172; that span reads MGR. ADP contacts are provided by residues 186–188, lysine 212, and 214–216; these read GCE and KKH. Substrate is bound by residues glutamate 223, arginine 244, and 250–253; that span reads HIQR.

This sequence belongs to the phosphofructokinase type A (PFKA) family. ATP-dependent PFK group I subfamily. Prokaryotic clade 'B1' sub-subfamily. As to quaternary structure, homotetramer. It depends on Mg(2+) as a cofactor.

Its subcellular location is the cytoplasm. It catalyses the reaction beta-D-fructose 6-phosphate + ATP = beta-D-fructose 1,6-bisphosphate + ADP + H(+). Its pathway is carbohydrate degradation; glycolysis; D-glyceraldehyde 3-phosphate and glycerone phosphate from D-glucose: step 3/4. Allosterically activated by ADP and other diphosphonucleosides, and allosterically inhibited by phosphoenolpyruvate. Its function is as follows. Catalyzes the phosphorylation of D-fructose 6-phosphate to fructose 1,6-bisphosphate by ATP, the first committing step of glycolysis. The chain is ATP-dependent 6-phosphofructokinase from Salmonella agona (strain SL483).